Here is a 568-residue protein sequence, read N- to C-terminus: Probable inactive 1-aminocyclopropane-1-carboxylate synthase-like protein 2 (568 aa).

The interval 1–21 is disordered; it reads MSHRSDTLPVPSGQRRGRVPR. An N6-(pyridoxal phosphate)lysine modification is found at lysine 395.

This sequence belongs to the class-I pyridoxal-phosphate-dependent aminotransferase family.

The chain is Probable inactive 1-aminocyclopropane-1-carboxylate synthase-like protein 2 (ACCSL) from Homo sapiens (Human).